A 430-amino-acid polypeptide reads, in one-letter code: Enolase (430 aa).

Q164 serves as a coordination point for (2R)-2-phosphoglycerate. The active-site Proton donor is E206. Mg(2+) is bound by residues D243, E286, and D313. 4 residues coordinate (2R)-2-phosphoglycerate: K338, R367, S368, and K389. Residue K338 is the Proton acceptor of the active site.

Belongs to the enolase family. As to quaternary structure, component of the RNA degradosome, a multiprotein complex involved in RNA processing and mRNA degradation. Mg(2+) is required as a cofactor.

Its subcellular location is the cytoplasm. It is found in the secreted. The protein resides in the cell surface. The catalysed reaction is (2R)-2-phosphoglycerate = phosphoenolpyruvate + H2O. It participates in carbohydrate degradation; glycolysis; pyruvate from D-glyceraldehyde 3-phosphate: step 4/5. In terms of biological role, catalyzes the reversible conversion of 2-phosphoglycerate (2-PG) into phosphoenolpyruvate (PEP). It is essential for the degradation of carbohydrates via glycolysis. The protein is Enolase of Dichelobacter nodosus (strain VCS1703A).